A 336-amino-acid polypeptide reads, in one-letter code: tRNA N6-adenosine threonylcarbamoyltransferase (336 aa).

Residues histidine 114 and histidine 118 each coordinate Fe cation. Residues 136-140, aspartate 169, glycine 182, aspartate 186, and asparagine 275 contribute to the substrate site; that span reads LVSGG. Residue aspartate 301 coordinates Fe cation.

This sequence belongs to the KAE1 / TsaD family. Fe(2+) serves as cofactor.

The protein localises to the cytoplasm. It catalyses the reaction L-threonylcarbamoyladenylate + adenosine(37) in tRNA = N(6)-L-threonylcarbamoyladenosine(37) in tRNA + AMP + H(+). Its function is as follows. Required for the formation of a threonylcarbamoyl group on adenosine at position 37 (t(6)A37) in tRNAs that read codons beginning with adenine. Is involved in the transfer of the threonylcarbamoyl moiety of threonylcarbamoyl-AMP (TC-AMP) to the N6 group of A37, together with TsaE and TsaB. TsaD likely plays a direct catalytic role in this reaction. The polypeptide is tRNA N6-adenosine threonylcarbamoyltransferase (Streptococcus mutans serotype c (strain ATCC 700610 / UA159)).